The primary structure comprises 105 residues: Pyrimidine/purine nucleoside phosphorylase (105 aa).

It belongs to the nucleoside phosphorylase PpnP family.

The catalysed reaction is a purine D-ribonucleoside + phosphate = a purine nucleobase + alpha-D-ribose 1-phosphate. The enzyme catalyses adenosine + phosphate = alpha-D-ribose 1-phosphate + adenine. It carries out the reaction cytidine + phosphate = cytosine + alpha-D-ribose 1-phosphate. It catalyses the reaction guanosine + phosphate = alpha-D-ribose 1-phosphate + guanine. The catalysed reaction is inosine + phosphate = alpha-D-ribose 1-phosphate + hypoxanthine. The enzyme catalyses thymidine + phosphate = 2-deoxy-alpha-D-ribose 1-phosphate + thymine. It carries out the reaction uridine + phosphate = alpha-D-ribose 1-phosphate + uracil. It catalyses the reaction xanthosine + phosphate = alpha-D-ribose 1-phosphate + xanthine. Catalyzes the phosphorolysis of diverse nucleosides, yielding D-ribose 1-phosphate and the respective free bases. Can use uridine, adenosine, guanosine, cytidine, thymidine, inosine and xanthosine as substrates. Also catalyzes the reverse reactions. The sequence is that of Pyrimidine/purine nucleoside phosphorylase from Cupriavidus taiwanensis (strain DSM 17343 / BCRC 17206 / CCUG 44338 / CIP 107171 / LMG 19424 / R1) (Ralstonia taiwanensis (strain LMG 19424)).